The following is a 371-amino-acid chain: Aspartate-semialdehyde dehydrogenase (371 aa).

NADP(+)-binding positions include 11 to 14, 38 to 39, and Gln75; these read RGMV and TS. Arg104 is a binding site for phosphate. The Acyl-thioester intermediate role is filled by Cys137. Residue Gln164 participates in substrate binding. Residue 167–168 participates in NADP(+) binding; that stretch reads SG. Glu243 contacts substrate. Lys246 serves as a coordination point for phosphate. Arg269 contacts substrate. His276 (proton acceptor) is an active-site residue. Gln352 is a binding site for NADP(+).

This sequence belongs to the aspartate-semialdehyde dehydrogenase family. As to quaternary structure, homodimer.

The catalysed reaction is L-aspartate 4-semialdehyde + phosphate + NADP(+) = 4-phospho-L-aspartate + NADPH + H(+). Its pathway is amino-acid biosynthesis; L-lysine biosynthesis via DAP pathway; (S)-tetrahydrodipicolinate from L-aspartate: step 2/4. It participates in amino-acid biosynthesis; L-methionine biosynthesis via de novo pathway; L-homoserine from L-aspartate: step 2/3. The protein operates within amino-acid biosynthesis; L-threonine biosynthesis; L-threonine from L-aspartate: step 2/5. Functionally, catalyzes the NADPH-dependent formation of L-aspartate-semialdehyde (L-ASA) by the reductive dephosphorylation of L-aspartyl-4-phosphate. The protein is Aspartate-semialdehyde dehydrogenase of Buchnera aphidicola subsp. Schizaphis graminum (strain Sg).